The chain runs to 478 residues: Sulfate adenylyltransferase subunit 1 (478 aa).

One can recognise a tr-type G domain in the interval Lys-28–Arg-244. The G1 stretch occupies residues Gly-37–Ser-44. A GTP-binding site is contributed by Gly-37–Ser-44. The G2 stretch occupies residues Gly-95 to Asp-99. The tract at residues Asp-116–Gly-119 is G3. Residues Asp-116–His-120 and Asn-171–Asp-174 contribute to the GTP site. Residues Asn-171–Asp-174 are G4. The interval Ser-209–Leu-211 is G5.

Belongs to the TRAFAC class translation factor GTPase superfamily. Classic translation factor GTPase family. CysN/NodQ subfamily. In terms of assembly, heterodimer composed of CysD, the smaller subunit, and CysN.

It catalyses the reaction sulfate + ATP + H(+) = adenosine 5'-phosphosulfate + diphosphate. The protein operates within sulfur metabolism; hydrogen sulfide biosynthesis; sulfite from sulfate: step 1/3. In terms of biological role, with CysD forms the ATP sulfurylase (ATPS) that catalyzes the adenylation of sulfate producing adenosine 5'-phosphosulfate (APS) and diphosphate, the first enzymatic step in sulfur assimilation pathway. APS synthesis involves the formation of a high-energy phosphoric-sulfuric acid anhydride bond driven by GTP hydrolysis by CysN coupled to ATP hydrolysis by CysD. The protein is Sulfate adenylyltransferase subunit 1 of Yersinia pseudotuberculosis serotype O:1b (strain IP 31758).